The chain runs to 36 residues: Cytochrome b6-f complex subunit 5 (36 aa).

Residues 5–25 (LLAGIVLGLVPVTLAGLFVAA) traverse the membrane as a helical segment.

The protein belongs to the PetG family. As to quaternary structure, the 4 large subunits of the cytochrome b6-f complex are cytochrome b6, subunit IV (17 kDa polypeptide, PetD), cytochrome f and the Rieske protein, while the 4 small subunits are PetG, PetL, PetM and PetN. The complex functions as a dimer.

The protein localises to the cellular thylakoid membrane. In terms of biological role, component of the cytochrome b6-f complex, which mediates electron transfer between photosystem II (PSII) and photosystem I (PSI), cyclic electron flow around PSI, and state transitions. PetG is required for either the stability or assembly of the cytochrome b6-f complex. This Acaryochloris marina (strain MBIC 11017) protein is Cytochrome b6-f complex subunit 5.